Here is a 421-residue protein sequence, read N- to C-terminus: F-box only protein 9 (421 aa).

A disordered region spans residues Met-1 to Ala-63. The span at Ala-11–Thr-20 shows a compositional bias: acidic residues. The segment covering Leu-40–Arg-52 has biased composition (polar residues). Basic and acidic residues predominate over residues Ala-54–Ala-63. Residues Ala-68–Ile-101 form a TPR repeat. An F-box domain is found at Gln-158 to Ala-209.

Part of the SCF (SKP1-CUL1-F-box) E3 ubiquitin-protein ligase complex SCF(fbxo9).

It is found in the cytoplasm. It participates in protein modification; protein ubiquitination. In terms of biological role, substrate recognition component of a SCF (SKP1-CUL1-F-box protein) E3 ubiquitin-protein ligase complex which mediates the ubiquitination and subsequent proteasomal degradation of target proteins and acts as a regulator of mTOR signaling. The sequence is that of F-box only protein 9 (fbxo9) from Danio rerio (Zebrafish).